A 195-amino-acid chain; its full sequence is Ephrin-A2 (195 aa).

The N-terminal stretch at 1-16 (MELSLVVFTVVCWVSV) is a signal peptide. The 134-residue stretch at 24 to 157 (SDRHAVYWNS…KLKVYVKPTS (134 aa)) folds into the Ephrin RBD domain. Asparagine 32 is a glycosylation site (N-linked (GlcNAc...) asparagine). 2 disulfides stabilise this stretch: cysteine 57–cysteine 97 and cysteine 85–cysteine 146. Residue cysteine 174 is the site of GPI-anchor amidated cysteine attachment. A propeptide spans 175–195 (GADGPCLAVLMLLLVFLLAGV) (removed in mature form).

Belongs to the ephrin family. In terms of assembly, binds to the receptor tyrosine kinases epha2, epha3, epha4 and epha5. Interacts with epha8; activates epha8. Widespread expression in the embryo.

The protein resides in the cell membrane. In terms of biological role, cell surface GPI-bound ligand for Eph receptors, a family of receptor tyrosine kinases which are crucial for migration, repulsion and adhesion during neuronal, vascular and epithelial development. Binds promiscuously Eph receptors residing on adjacent cells, leading to contact-dependent bidirectional signaling into neighboring cells. The signaling pathway downstream of the receptor is referred to as forward signaling while the signaling pathway downstream of the ephrin ligand is referred to as reverse signaling. With the epha2 receptor may play a role in bone remodeling through regulation of osteoclastogenesis and osteoblastogenesis. The protein is Ephrin-A2 (efna2) of Danio rerio (Zebrafish).